A 369-amino-acid chain; its full sequence is Anhydro-N-acetylmuramic acid kinase (369 aa).

12-19 (GTSLDGVD) serves as a coordination point for ATP.

The protein belongs to the anhydro-N-acetylmuramic acid kinase family.

It catalyses the reaction 1,6-anhydro-N-acetyl-beta-muramate + ATP + H2O = N-acetyl-D-muramate 6-phosphate + ADP + H(+). It functions in the pathway amino-sugar metabolism; 1,6-anhydro-N-acetylmuramate degradation. It participates in cell wall biogenesis; peptidoglycan recycling. Functionally, catalyzes the specific phosphorylation of 1,6-anhydro-N-acetylmuramic acid (anhMurNAc) with the simultaneous cleavage of the 1,6-anhydro ring, generating MurNAc-6-P. Is required for the utilization of anhMurNAc either imported from the medium or derived from its own cell wall murein, and thus plays a role in cell wall recycling. This chain is Anhydro-N-acetylmuramic acid kinase, found in Shigella flexneri serotype 5b (strain 8401).